Reading from the N-terminus, the 170-residue chain is Regulator of ribonuclease activity A (170 aa).

This sequence belongs to the RraA family. Homotrimer. Binds to both RNA-binding sites in the C-terminal region of Rne and to RhlB.

The protein localises to the cytoplasm. Functionally, globally modulates RNA abundance by binding to RNase E (Rne) and regulating its endonucleolytic activity. Can modulate Rne action in a substrate-dependent manner by altering the composition of the degradosome. Modulates RNA-binding and helicase activities of the degradosome. In Psychromonas ingrahamii (strain DSM 17664 / CCUG 51855 / 37), this protein is Regulator of ribonuclease activity A.